Reading from the N-terminus, the 342-residue chain is L-threonine 3-dehydrogenase (342 aa).

A Zn(2+)-binding site is contributed by C38. Residues T40 and H43 each act as charge relay system in the active site. H63, E64, C93, C96, C99, and C107 together coordinate Zn(2+). NAD(+) is bound by residues I175, D195, R200, 262–264 (LGL), and 286–287 (IY).

It belongs to the zinc-containing alcohol dehydrogenase family. Homotetramer. Zn(2+) is required as a cofactor.

It localises to the cytoplasm. It catalyses the reaction L-threonine + NAD(+) = (2S)-2-amino-3-oxobutanoate + NADH + H(+). It participates in amino-acid degradation; L-threonine degradation via oxydo-reductase pathway; glycine from L-threonine: step 1/2. In terms of biological role, catalyzes the NAD(+)-dependent oxidation of L-threonine to 2-amino-3-ketobutyrate. The polypeptide is L-threonine 3-dehydrogenase (Streptomyces avermitilis (strain ATCC 31267 / DSM 46492 / JCM 5070 / NBRC 14893 / NCIMB 12804 / NRRL 8165 / MA-4680)).